A 207-amino-acid chain; its full sequence is Ras-related protein Rab-2A (207 aa).

GTP is bound at residue 12–20 (GDTGVGKSC). The Effector region motif lies at 34–42 (HDLTIGVEF). GTP-binding positions include 60-64 (DTAGQ), 118-121 (NKSD), and 148-150 (SAK). Positions 187 to 207 (GAPTSKQDGTDQKPAGGGCCK) are disordered. S-geranylgeranyl cysteine attachment occurs at residues Cys205 and Cys206.

It belongs to the small GTPase superfamily. Rab family.

The protein resides in the cell membrane. The enzyme catalyses GTP + H2O = GDP + phosphate + H(+). Its activity is regulated as follows. Regulated by guanine nucleotide exchange factors (GEFs) which promote the exchange of bound GDP for free GTP, GTPase activating proteins (GAPs) which increase the GTP hydrolysis activity, and GDP dissociation inhibitors which inhibit the dissociation of the nucleotide from the GTPase. Its function is as follows. The small GTPases Rab are key regulators of intracellular membrane trafficking, from the formation of transport vesicles to their fusion with membranes. Rabs cycle between active GTP-bound and inactive GDP-bound states. In their active state, drive transport of vesicular carriers from donor organelles to acceptor organelles to regulate the membrane traffic that maintains organelle identity and morphology. The protein is Ras-related protein Rab-2A (rab2A) of Dictyostelium discoideum (Social amoeba).